Here is a 1309-residue protein sequence, read N- to C-terminus: Tetratricopeptide repeat protein 41 (1309 aa).

6 TPR repeats span residues 399–432 (PQLEMDFLNEDSNVLVFSLLIEVFMAAISLKPCI), 651–684 (WIQEKPNGLLYFQHQSLRNAVEHKMLGVTISVRE), 817–851 (LTFLLFLWGFLTLLGNRRANNLFSGAAPFLVSVQS), 859–892 (LKAQNAIGELYLDIGMMQKGLTYFQKAWSNLLRF), 989–1024 (MSYFSSAVLMEFLFSRSQRKQAIEYYKQVIKIKEKA), and 1042–1079 (SDTLCKLAGQLLSGDFCHHATMEAVSYLYRSLDLRAAH).

It is found in the cytoplasm. In Rattus norvegicus (Rat), this protein is Tetratricopeptide repeat protein 41.